Here is an 87-residue protein sequence, read N- to C-terminus: U15-lycotoxin-Ls1f (87 aa).

Residues 1–20 (MNSKIFAVLLLLGLLSCVLS) form the signal peptide. One can recognise a WAP domain in the interval 21–66 (DQYCPKSSITACKKMNIRNDCCKDDDCTGGSWCCATPCGNFCKYPT). 5 disulfides stabilise this stretch: cysteine 24/cysteine 54, cysteine 32/cysteine 58, cysteine 41/cysteine 53, cysteine 42/cysteine 80, and cysteine 47/cysteine 62.

Belongs to the venom protein 11 family. 01 (wap-1) subfamily. Contains 5 disulfide bonds. As to expression, expressed by the venom gland.

Its subcellular location is the secreted. Functionally, has antibacterial activity. This chain is U15-lycotoxin-Ls1f, found in Lycosa singoriensis (Wolf spider).